The following is a 509-amino-acid chain: Protein WHAT'S THIS FACTOR 1 homolog, chloroplastic (509 aa).

Residues 1-56 (MDAKLLLLPFPSPPATLHHHPPPPKSLFLGASLPLLHPPPPLRLLRPGAPRRLAVV) constitute a chloroplast transit peptide. Residues 65-393 (KEIPFDNVIQ…LKEKMRALVA (329 aa)) enclose the PORR domain. 2 disordered regions span residues 402 to 431 (VPAT…DEDE) and 444 to 509 (SGGK…RERW). The segment covering 461–474 (ENDDSPPDFEDDDG) has biased composition (acidic residues).

The protein resides in the plastid. It is found in the chloroplast. Its function is as follows. RNA-binding protein involved in group II intron splicing. Binds specific group II introns and promotes their splicing. Functions in the context of a heterodimer with the ribonuclease III domain-containing protein RNC1. In Oryza sativa subsp. japonica (Rice), this protein is Protein WHAT'S THIS FACTOR 1 homolog, chloroplastic.